A 487-amino-acid chain; its full sequence is MKYKDLREFLTLLEGQGELVRIKQEIDPYLEMAEISDRTLRKGGPAILFENPKGYRMPVLCNLFGTPKRVALGMGQEDTHALRELGKLLAFLKEPEPPKGFKELIGQLPQWKQVLNMPSKVLGKADCQQVVLSGDEVELYKLPIMHCHEGDVAPLVAWGLTITQGPYKKRQNLGIYRQQLIGKNKLIMRWLSHRGGALDFHEWKEANPDKPFPVSVAIGADPATILAAVTPIPDTLSEYAFAGLLRGQKTEVTKSISNDLEVPASAEIVLEGYIDPNETALEGPYGDHTGYYNEQEYFPVFTVTHITMRRDAIYHSTYTGRPPDEPAVLGEALNEVFIPILQKQFPEIVDFYLPPEGCSYRLAVVTIKKQYAGHAKRVMMGVWSFLRQFMYTKFVIVCDDDVNARDWKDVIWAITTRCDPSRDTTLIDHTPIDYLDFASPIAGLGSKMGIDATNKWPGETSREWGTPIKKDPNVVKRVDEIWDQLGL.

Asparagine 172 contacts Mn(2+). Prenylated FMN contacts are provided by residues isoleucine 175–arginine 177, arginine 189–leucine 191, and arginine 194–glycine 195. Residue glutamate 238 coordinates Mn(2+). Residue aspartate 287 is the Proton donor of the active site.

It belongs to the UbiD family. Homohexamer. Requires prenylated FMN as cofactor. Mn(2+) serves as cofactor.

It is found in the cell membrane. It catalyses the reaction a 4-hydroxy-3-(all-trans-polyprenyl)benzoate + H(+) = a 2-(all-trans-polyprenyl)phenol + CO2. The protein operates within cofactor biosynthesis; ubiquinone biosynthesis. Catalyzes the decarboxylation of 3-octaprenyl-4-hydroxy benzoate to 2-octaprenylphenol, an intermediate step in ubiquinone biosynthesis. The protein is 3-octaprenyl-4-hydroxybenzoate carboxy-lyase of Actinobacillus pleuropneumoniae serotype 5b (strain L20).